The chain runs to 698 residues: Probable metal-nicotianamine transporter YSL17 (698 aa).

The disordered stretch occupies residues 1–36; it reads MAEEARGGQRVVVDDDREDASSVASSTERAFEGEPL. Helical transmembrane passes span 43-63, 67-87, 114-134, 157-177, 216-236, 277-297, 322-342, 395-415, 424-444, 463-483, 511-531, 567-587, 607-627, and 644-664; these read VTARSAAVSGVLGAVVSVVAM, LTSGLLPSLGVPAGLLGFFLA, IAVVSCSTIAFSGGFGTYILG, IGRVIAFLFLVNFSGLFIIVP, VVTLFKSLGATVLWPIFQWFF, MITASMLAGSIVSWGILWPYI, VFVGVSMILADGLFTILSALV, WVAVASYAALAALSVVAVPLL, VAAAYVAAPVFAFCNAYGVGV, SWVGMDGGGVVAGLAACGIIV, VGQVAGTALGCVVNPAIFWVF, LPDHSVLLCKLFFAMALALSA, IGVAVAFFVPPRIPVGMAVGC, and LLLPAVASGLICGDGLGSLAS.

Belongs to the YSL (TC 2.A.67.2) family. As to expression, expressed at low levels in roots.

The protein localises to the membrane. Functionally, may be involved in the transport of nicotianamine-chelated metals. The polypeptide is Probable metal-nicotianamine transporter YSL17 (YSL17) (Oryza sativa subsp. japonica (Rice)).